The sequence spans 294 residues: Cyclin-dependent kinase A-1 (294 aa).

Positions 4 to 287 (YEKVEKIGEG…ARAALEHEYF (284 aa)) constitute a Protein kinase domain. ATP-binding positions include 10–18 (IGEGTYGVV) and Lys-33. The residue at position 15 (Tyr-15) is a Phosphotyrosine. Residue Asp-127 is the Proton acceptor of the active site. Thr-161 is modified (phosphothreonine).

It belongs to the protein kinase superfamily. CMGC Ser/Thr protein kinase family. CDC2/CDKX subfamily. In terms of assembly, interacts with CDT1A, CYCA2-3, CYCD2-1, CYCD3-1, CYCD4-1, CYCD4-2, CYCH1-1, CYCU1-1, CYCU2-1, CYCU2-2, CYCU3-1, CYCU4-1, CYCU4-2, CYCU4-3, CKS1, KRP2/ICK2, KRP3/ICK6, KRP4/ICK7, KRP6/ICK4, KRP7/ICK5, and C-terminal domain of KRP1/ICK1. Interacts with WEE1 and TIF4A-1/EIF4A-1. Interacts with PAS2; when phosphorylated at Tyr-15. Interacts with SMR3, SMR4, SMR5, SMR6, SMR8 and At4g14310. Binds to CYCD3-2. Component of a DREAM-like complex which modulates a variety of developmentally regulated genes and of the mitotic genes in proliferating and differentiated cells. Interacts with MYB3R3 at later and with MYB3R4 at earlier stages of leaf development. May interact with SPCH. Post-translationally, phosphorylated at Tyr-15 by WEE1. Phosphorylation at Thr-161 is important for the kinase activity and substrate binding. Binding to the anti-phosphatase PAS2 prevents dephosphorylation. In terms of tissue distribution, expressed in roots, stems, flowers and siliques.

It is found in the cytoplasm. It localises to the nucleus. It catalyses the reaction L-seryl-[protein] + ATP = O-phospho-L-seryl-[protein] + ADP + H(+). The enzyme catalyses L-threonyl-[protein] + ATP = O-phospho-L-threonyl-[protein] + ADP + H(+). The catalysed reaction is [DNA-directed RNA polymerase] + ATP = phospho-[DNA-directed RNA polymerase] + ADP + H(+). With respect to regulation, CDK kinase activated by CDKF-1. CDK kinase activity inhibited by KRP1/ICK1, KRP2/ICK2, KRP3/ICK6, KRP4/ICK7, KRP5/ICK3, KRP6/ICK4 and KRP7/ICK5. Down-regulated by phosphorylation by WEE1. Its function is as follows. Involved in the control of the cell cycle. Essential for both G1/S and G2/M (mitosis) phase transitions. Functions in cell morphogenesis as well as cell proliferation. Required for cell division (entry into mitosis) of the generative cell in male gametogenesis. Required to trigger guard mother cells (GMC) symmetric divisions at the late stage of stomatal development, probably via the regulation of G1 to S transition in the cell cycle. Required for the function of SPCH in entering the stomatal lineage. Promotes divisions in the guard cells (GCs) after the guard mother cells (GMC) symmetric division when in the presence of CYCD3-2 via the phosphorylation of SPCH. The chain is Cyclin-dependent kinase A-1 from Arabidopsis thaliana (Mouse-ear cress).